Consider the following 286-residue polypeptide: Pantothenate synthetase (286 aa).

Position 31 to 38 (31 to 38 (MGALHDGH)) interacts with ATP. His38 functions as the Proton donor in the catalytic mechanism. (R)-pantoate is bound at residue Gln62. Gln62 contacts beta-alanine. 148 to 151 (GKKD) lines the ATP pocket. Residue Gln154 participates in (R)-pantoate binding. ATP-binding positions include Val177 and 185–188 (KSSR).

This sequence belongs to the pantothenate synthetase family. Homodimer.

It is found in the cytoplasm. The enzyme catalyses (R)-pantoate + beta-alanine + ATP = (R)-pantothenate + AMP + diphosphate + H(+). Its pathway is cofactor biosynthesis; (R)-pantothenate biosynthesis; (R)-pantothenate from (R)-pantoate and beta-alanine: step 1/1. Functionally, catalyzes the condensation of pantoate with beta-alanine in an ATP-dependent reaction via a pantoyl-adenylate intermediate. This is Pantothenate synthetase from Staphylococcus epidermidis (strain ATCC 35984 / DSM 28319 / BCRC 17069 / CCUG 31568 / BM 3577 / RP62A).